The chain runs to 104 residues: MLLNLFKFSKKLFQENFNKVKLLNHCKSFLFLGESDNKFFTNEKSELVFSDKRDRPFSSDRINRPFSPDKKGEPIFPDKRDRPFSPDRINRPFSPDKKGEPIFP.

The tract at residues 55–104 (RPFSSDRINRPFSPDKKGEPIFPDKRDRPFSPDRINRPFSPDKKGEPIFP) is disordered.

Its subcellular location is the plastid. This is an uncharacterized protein from Euglena longa (Euglenophycean alga).